Reading from the N-terminus, the 391-residue chain is ATPase GET3C (391 aa).

Residues 1-50 constitute a mitochondrion transit peptide; that stretch reads MAALLLLNRVSRSTSSISLHRVAGTLGFNSFNAQIHGDRISGTLFRVRSL. 77-84 contributes to the ATP binding site; it reads KGGVGKTS. The active site involves aspartate 106. Asparagine 328 is a binding site for ATP.

The protein belongs to the arsA ATPase family.

It localises to the mitochondrion matrix. The catalysed reaction is ATP + H2O = ADP + phosphate + H(+). The sequence is that of ATPase GET3C from Arabidopsis thaliana (Mouse-ear cress).